The primary structure comprises 109 residues: Homeobox protein E60 (109 aa).

Residues 1–31 (PRTRRVKRSDGRGNGGTPEEKRPRTAFSGEQ) are disordered. The segment at residues 20–79 (EKRPRTAFSGEQLARLKREFAENRYLTERRRQQLSRDLGLNEAQIKIWFQNKRAKIKKAS) is a DNA-binding region (homeobox).

It belongs to the engrailed homeobox family.

The protein resides in the nucleus. This Apis mellifera (Honeybee) protein is Homeobox protein E60.